Here is a 63-residue protein sequence, read N- to C-terminus: Large ribosomal subunit protein bL32 (63 aa).

Positions 1 to 16 (MAVPKRKTSRMKRGFR) are enriched in basic residues. A disordered region spans residues 1–22 (MAVPKRKTSRMKRGFRRSADAI).

The protein belongs to the bacterial ribosomal protein bL32 family.

This Beijerinckia indica subsp. indica (strain ATCC 9039 / DSM 1715 / NCIMB 8712) protein is Large ribosomal subunit protein bL32.